A 418-amino-acid polypeptide reads, in one-letter code: Putative ion-transport protein YfeO (418 aa).

Helical transmembrane passes span 10–30 (LLLS…LIVV), 54–74 (DSPF…GLVI), 99–119 (ALPG…SLGP), 120–140 (EHPI…RLLP), 149–169 (ILAS…AALI), 186–206 (LFAP…FFHP), 223–243 (ILSG…AVWC), 258–278 (VLML…AGPV), 300–320 (DYFL…ASGF), 322–342 (GGRI…LHEH), 343–363 (VPAV…VLVV), and 371–391 (LFMA…CIVM).

It belongs to the chloride channel (TC 2.A.49) family.

It is found in the cell membrane. In Escherichia coli (strain SMS-3-5 / SECEC), this protein is Putative ion-transport protein YfeO.